The following is a 322-amino-acid chain: Lipoyl synthase (322 aa).

Positions 1–24 (MVTVLDTVSKPRPRHPEKAHRPDQ) are disordered. A compositionally biased stretch (basic and acidic residues) spans 14–24 (RHPEKAHRPDQ). [4Fe-4S] cluster is bound by residues Cys59, Cys64, Cys70, Cys85, Cys89, Cys92, and Ser298. In terms of domain architecture, Radical SAM core spans 71–287 (WDKKHATFMI…ETIAYTKGFL (217 aa)).

The protein belongs to the radical SAM superfamily. Lipoyl synthase family. The cofactor is [4Fe-4S] cluster.

The protein localises to the cytoplasm. It carries out the reaction [[Fe-S] cluster scaffold protein carrying a second [4Fe-4S](2+) cluster] + N(6)-octanoyl-L-lysyl-[protein] + 2 oxidized [2Fe-2S]-[ferredoxin] + 2 S-adenosyl-L-methionine + 4 H(+) = [[Fe-S] cluster scaffold protein] + N(6)-[(R)-dihydrolipoyl]-L-lysyl-[protein] + 4 Fe(3+) + 2 hydrogen sulfide + 2 5'-deoxyadenosine + 2 L-methionine + 2 reduced [2Fe-2S]-[ferredoxin]. It functions in the pathway protein modification; protein lipoylation via endogenous pathway; protein N(6)-(lipoyl)lysine from octanoyl-[acyl-carrier-protein]: step 2/2. Its function is as follows. Catalyzes the radical-mediated insertion of two sulfur atoms into the C-6 and C-8 positions of the octanoyl moiety bound to the lipoyl domains of lipoate-dependent enzymes, thereby converting the octanoylated domains into lipoylated derivatives. The protein is Lipoyl synthase of Chelativorans sp. (strain BNC1).